An 874-amino-acid chain; its full sequence is Leucine--tRNA ligase (874 aa).

The 'HIGH' region signature appears at 43 to 53 (PYPSGRIHIGH). The 'KMSKS' region motif lies at 630–634 (KMSKS). Lys-633 provides a ligand contact to ATP.

Belongs to the class-I aminoacyl-tRNA synthetase family.

It is found in the cytoplasm. It carries out the reaction tRNA(Leu) + L-leucine + ATP = L-leucyl-tRNA(Leu) + AMP + diphosphate. This chain is Leucine--tRNA ligase, found in Bradyrhizobium sp. (strain BTAi1 / ATCC BAA-1182).